Consider the following 343-residue polypeptide: Dihydroorotate dehydrogenase (quinone) (343 aa).

FMN contacts are provided by residues 61–65 (AGLDK) and Thr85. Lys65 is a binding site for substrate. 110 to 114 (NRMGF) lines the substrate pocket. 2 residues coordinate FMN: Asn138 and Asn171. Asn171 contacts substrate. The active-site Nucleophile is the Ser174. Asn176 lines the substrate pocket. FMN-binding residues include Lys216 and Thr244. Substrate is bound at residue 245–246 (NT). FMN is bound by residues Gly267, Gly296, and 317 to 318 (YS).

Belongs to the dihydroorotate dehydrogenase family. Type 2 subfamily. As to quaternary structure, monomer. FMN serves as cofactor.

The protein localises to the cell membrane. It catalyses the reaction (S)-dihydroorotate + a quinone = orotate + a quinol. The protein operates within pyrimidine metabolism; UMP biosynthesis via de novo pathway; orotate from (S)-dihydroorotate (quinone route): step 1/1. Catalyzes the conversion of dihydroorotate to orotate with quinone as electron acceptor. This Pseudomonas savastanoi pv. phaseolicola (strain 1448A / Race 6) (Pseudomonas syringae pv. phaseolicola (strain 1448A / Race 6)) protein is Dihydroorotate dehydrogenase (quinone).